The sequence spans 559 residues: Poly(U)-binding-splicing factor PUF60 (559 aa).

The segment at 1-516 (MATATIALQV…EDAEIIVKIF (516 aa)) is inhibits homodimerization. Residues Gln-14 and Lys-43 each participate in a glycyl lysine isopeptide (Lys-Gly) (interchain with G-Cter in SUMO2) cross-link. A Phosphothreonine modification is found at Thr-60. The inhibits transcriptional repression, interaction with ERCC3 and apoptosis induction stretch occupies residues 77–559 (QSIKSVLVKQ…ERFDNSDLSA (483 aa)). Residue Lys-80 forms a Glycyl lysine isopeptide (Lys-Gly) (interchain with G-Cter in SUMO2) linkage. Ser-112 carries the post-translational modification Phosphoserine. RRM domains lie at 129-207 (CRVY…RPSN) and 226-304 (NRIY…KAVT). At Ser-244 the chain carries Phosphoserine. N6-acetyllysine is present on Lys-251. At Thr-314 the chain carries Phosphothreonine. Residues 416–437 (KKEKEEEELFPESERPEMLSEQ) form a disordered region. Lys-419 is covalently cross-linked (Glycyl lysine isopeptide (Lys-Gly) (interchain with G-Cter in SUMO2)). A compositionally biased stretch (basic and acidic residues) spans 427-437 (ESERPEMLSEQ). Lys-454 carries the post-translational modification N6-acetyllysine. Residue Lys-458 forms a Glycyl lysine isopeptide (Lys-Gly) (interchain with G-Cter in SUMO2) linkage. The RRM 3; atypical domain occupies 462 to 549 (TVMVLRNMVD…RKVVAEVYDQ (88 aa)).

Belongs to the RRM half pint family. As to quaternary structure, homodimer. Associates with the spliceosome. Found in a complex with RO60 and Y5 RNA. Found in a complex with FUBP1 and far upstream element (FUSE) DNA segment. Interacts directly with ERCC3. Interacts with CDK7 and GTF2H1. Interacts with SRSF11/P54. Does not interact with ERCC3 in xeroderma pigmentosum complementation group B (XPB) cells. Interacts with ARGLU1; interaction may be involved in ARGLU1-mediated modulation of alternative splicing. Isoform 2 is expressed in colonic epithelium and colorectal epithelium cancer (at protein level). Isoform 6 is expressed in colorectal epithelial cancer but below detection level in colonic epithelium. Expressed in heart, brain, placenta, lung, liver, skeletal muscle, kidney, pancreas, spleen, thymus, prostate, testis, ovary, small intestine, colon and peripheral blood leukocytes.

It is found in the nucleus. Functionally, DNA- and RNA-binding protein, involved in several nuclear processes such as pre-mRNA splicing, apoptosis and transcription regulation. In association with FUBP1 regulates MYC transcription at the P2 promoter through the core-TFIIH basal transcription factor. Acts as a transcriptional repressor through the core-TFIIH basal transcription factor. Represses FUBP1-induced transcriptional activation but not basal transcription. Decreases ERCC3 helicase activity. Does not repress TFIIH-mediated transcription in xeroderma pigmentosum complementation group B (XPB) cells. Is also involved in pre-mRNA splicing. Promotes splicing of an intron with weak 3'-splice site and pyrimidine tract in a cooperative manner with U2AF2. Involved in apoptosis induction when overexpressed in HeLa cells. Isoform 6 failed to repress MYC transcription and inhibited FIR-induced apoptosis in colorectal cancer. Isoform 6 may contribute to tumor progression by enabling increased MYC expression and greater resistance to apoptosis in tumors than in normal cells. Modulates alternative splicing of several mRNAs. Binds to relaxed DNA of active promoter regions. Binds to the pyrimidine tract and 3'-splice site regions of pre-mRNA; binding is enhanced in presence of U2AF2. Binds to Y5 RNA in association with RO60. Binds to poly(U) RNA. The polypeptide is Poly(U)-binding-splicing factor PUF60 (Homo sapiens (Human)).